A 149-amino-acid chain; its full sequence is Protein DOWN-REGULATED IN DIF1 11 (149 aa).

An N-terminal signal peptide occupies residues 1 to 22 (MEKAILITFLIATTSMVYQTIG).

In terms of tissue distribution, mostly expressed in embryo sac cells. Restricted to synergid cells, especially in the filiform apparatus of mature female gametophyte, via MYB98-mediated transcription regulation. Also detected at low levels in egg and central cells.

The chain is Protein DOWN-REGULATED IN DIF1 11 from Arabidopsis thaliana (Mouse-ear cress).